The sequence spans 464 residues: tRNA modification GTPase MnmE (464 aa).

Residues R25, E87, and K130 each contribute to the (6S)-5-formyl-5,6,7,8-tetrahydrofolate site. The region spanning 226–386 is the TrmE-type G domain; that stretch reads GLSVVLAGQP…LRAELLRIAG (161 aa). Residue N236 coordinates K(+). GTP is bound by residues 236 to 241, 255 to 261, and 280 to 283; these read NVGKSS, TPIAGTT, and DTAG. Residue S240 participates in Mg(2+) binding. K(+)-binding residues include T255, I257, and T260. A Mg(2+)-binding site is contributed by T261. K464 contacts (6S)-5-formyl-5,6,7,8-tetrahydrofolate.

Belongs to the TRAFAC class TrmE-Era-EngA-EngB-Septin-like GTPase superfamily. TrmE GTPase family. In terms of assembly, homodimer. Heterotetramer of two MnmE and two MnmG subunits. Requires K(+) as cofactor.

The protein localises to the cytoplasm. Exhibits a very high intrinsic GTPase hydrolysis rate. Involved in the addition of a carboxymethylaminomethyl (cmnm) group at the wobble position (U34) of certain tRNAs, forming tRNA-cmnm(5)s(2)U34. The protein is tRNA modification GTPase MnmE of Burkholderia orbicola (strain AU 1054).